The chain runs to 417 residues: Serine hydroxymethyltransferase (417 aa).

(6S)-5,6,7,8-tetrahydrofolate-binding positions include L112 and 116-118 (GHL). N6-(pyridoxal phosphate)lysine is present on K221. Residue E247 coordinates (6S)-5,6,7,8-tetrahydrofolate.

The protein belongs to the SHMT family. Homodimer. Pyridoxal 5'-phosphate serves as cofactor.

It is found in the cytoplasm. It carries out the reaction (6R)-5,10-methylene-5,6,7,8-tetrahydrofolate + glycine + H2O = (6S)-5,6,7,8-tetrahydrofolate + L-serine. Its pathway is one-carbon metabolism; tetrahydrofolate interconversion. It functions in the pathway amino-acid biosynthesis; glycine biosynthesis; glycine from L-serine: step 1/1. In terms of biological role, catalyzes the reversible interconversion of serine and glycine with tetrahydrofolate (THF) serving as the one-carbon carrier. This reaction serves as the major source of one-carbon groups required for the biosynthesis of purines, thymidylate, methionine, and other important biomolecules. Also exhibits THF-independent aldolase activity toward beta-hydroxyamino acids, producing glycine and aldehydes, via a retro-aldol mechanism. The protein is Serine hydroxymethyltransferase of Borreliella burgdorferi (strain ATCC 35210 / DSM 4680 / CIP 102532 / B31) (Borrelia burgdorferi).